The primary structure comprises 397 residues: Tryptophan synthase beta chain (397 aa).

Lys86 is subject to N6-(pyridoxal phosphate)lysine.

The protein belongs to the TrpB family. Tetramer of two alpha and two beta chains. Requires pyridoxal 5'-phosphate as cofactor.

It catalyses the reaction (1S,2R)-1-C-(indol-3-yl)glycerol 3-phosphate + L-serine = D-glyceraldehyde 3-phosphate + L-tryptophan + H2O. Its pathway is amino-acid biosynthesis; L-tryptophan biosynthesis; L-tryptophan from chorismate: step 5/5. Its function is as follows. The beta subunit is responsible for the synthesis of L-tryptophan from indole and L-serine. The protein is Tryptophan synthase beta chain of Edwardsiella ictaluri (strain 93-146).